A 320-amino-acid polypeptide reads, in one-letter code: uncharacterized protein (320 aa).

As to quaternary structure, interacts with VP1054, VP39 and VP80.

It is found in the virion. It localises to the host nucleus. The protein resides in the host cytoplasm. Its function is as follows. Plays a role in nucleocapsid assembly and is essential for viral replication. Distributed over the cylindrical capsid sheath of nucleocapsid. This is an uncharacterized protein from Lepidoptera (butterflies and moths).